A 939-amino-acid polypeptide reads, in one-letter code: Translation initiation factor IF-2 (939 aa).

The segment covering 81–94 has biased composition (basic and acidic residues); sequence EEQSRKAYEKEQQL. Disordered regions lie at residues 81–303 and 316–337; these read EEQS…KKVE and TISG…KMRR. Residues 99–108 are compositionally biased toward low complexity; it reads SSAPSPAPAA. 2 stretches are compositionally biased toward basic and acidic residues: residues 112-127 and 148-173; these read EPVK…RHEP and SPKE…EKAA. A compositionally biased stretch (low complexity) spans 178–189; sequence EAQPEAQSQQEP. Residues 244–255 are compositionally biased toward basic and acidic residues; that stretch reads FKENAAELKDEF. A compositionally biased stretch (low complexity) spans 276 to 287; sequence AAGEGESTTGGE. Residues 292 to 301 are compositionally biased toward basic residues; the sequence is KKKKGKKKKK. The segment covering 318–328 has biased composition (low complexity); that stretch reads SGMDDSGSSGS. The tr-type G domain occupies 436–606; sequence TRPPVVTIMG…LTEAEVRELK (171 aa). The interval 445 to 452 is G1; that stretch reads GHVDHGKT. 445–452 is a GTP binding site; that stretch reads GHVDHGKT. Residues 470–474 are G2; the sequence is GITQH. The G3 stretch occupies residues 492–495; sequence DTPG. GTP contacts are provided by residues 492 to 496 and 546 to 549; these read DTPGH and NKID. The G4 stretch occupies residues 546–549; the sequence is NKID. The G5 stretch occupies residues 582–584; it reads SAK.

This sequence belongs to the TRAFAC class translation factor GTPase superfamily. Classic translation factor GTPase family. IF-2 subfamily.

It localises to the cytoplasm. Functionally, one of the essential components for the initiation of protein synthesis. Protects formylmethionyl-tRNA from spontaneous hydrolysis and promotes its binding to the 30S ribosomal subunits. Also involved in the hydrolysis of GTP during the formation of the 70S ribosomal complex. The chain is Translation initiation factor IF-2 from Chlorobaculum parvum (strain DSM 263 / NCIMB 8327) (Chlorobium vibrioforme subsp. thiosulfatophilum).